Consider the following 306-residue polypeptide: Pantothenate kinase (306 aa).

Glycine 91–serine 98 is an ATP binding site.

Belongs to the prokaryotic pantothenate kinase family.

It is found in the cytoplasm. The catalysed reaction is (R)-pantothenate + ATP = (R)-4'-phosphopantothenate + ADP + H(+). It functions in the pathway cofactor biosynthesis; coenzyme A biosynthesis; CoA from (R)-pantothenate: step 1/5. In Streptococcus equi subsp. zooepidemicus (strain MGCS10565), this protein is Pantothenate kinase.